Consider the following 103-residue polypeptide: MQNQRIRIRLKAFDHKLIDASTQEIVETAKRTGAQVRGPIPLPTRKERFTVLISPHVNKDARDQYEIRTHKRLLDIVEPTEKTVDALMKLDLAAGVEVQISLG.

Belongs to the universal ribosomal protein uS10 family. In terms of assembly, part of the 30S ribosomal subunit.

Functionally, involved in the binding of tRNA to the ribosomes. The polypeptide is Small ribosomal subunit protein uS10 (Cellvibrio japonicus (strain Ueda107) (Pseudomonas fluorescens subsp. cellulosa)).